The primary structure comprises 670 residues: Leiomodin-3 (670 aa).

Disordered stretches follow at residues 34–72 (EMDD…EEID), 94–120 (EIAP…GSFD), 139–165 (EEER…EDKV), and 202–274 (EDKV…NWVP). 5 stretches are compositionally biased toward basic and acidic residues: residues 40 to 63 (PDER…RDCT), 97 to 112 (PDER…DQTD), 153 to 163 (TNEEHEAKNED), 205 to 214 (VCDKPVKTDL), and 249 to 261 (TETK…KEDS). Positions 150-183 (SQKTNEEHEAKNEDKVEELELVYEEIVEEVEGGQ) form a coiled coil. Residues 464-494 (DRQRQQRMEEQKLQQMKEQRKVMEMYEDSLN) are a coiled coil. The interval 517-556 (NGAEDIPEDSPEPSPQPSPPHQLCKTQHLAPQQHPPNLST) is disordered. The 20-residue stretch at 637 to 656 (PRDHLLSEIRQSNVAYLKAV) folds into the WH2 domain.

Belongs to the tropomodulin family. As to expression, expressed in muscle (at protein level).

It is found in the cytoplasm. The protein localises to the myofibril. It localises to the sarcomere. The protein resides in the a band. Its subcellular location is the m line. It is found in the cytoskeleton. Functionally, essential for the organization of sarcomeric thin filaments in skeletal muscle. This chain is Leiomodin-3, found in Danio rerio (Zebrafish).